Reading from the N-terminus, the 631-residue chain is 2-isopropylmalate synthase 2, chloroplastic (631 aa).

The transit peptide at 1–46 (MESSILKSPNLSSPSFGVPSIPALSSSSTSPFSSLHLRSQNHRTIS) directs the protein to the chloroplast. One can recognise a Pyruvate carboxyltransferase domain in the interval 87–360 (VRIFDTTLRD…FTGIDTRHIV (274 aa)). Residues D96, H293, and N329 each coordinate a divalent metal cation.

The protein belongs to the alpha-IPM synthase/homocitrate synthase family. LeuA type 1 subfamily. Homotetramer. Mg(2+) is required as a cofactor. Mn(2+) serves as cofactor. In terms of tissue distribution, expressed in roots, stems, leaves, flowers and siliques.

The protein resides in the plastid. Its subcellular location is the chloroplast. The catalysed reaction is 3-methyl-2-oxobutanoate + acetyl-CoA + H2O = (2S)-2-isopropylmalate + CoA + H(+). It participates in amino-acid biosynthesis; L-leucine biosynthesis; L-leucine from 3-methyl-2-oxobutanoate: step 1/4. With respect to regulation, feedback inhibition by Leu. Functionally, catalyzes the condensation of the acetyl group of acetyl-CoA with 3-methyl-2-oxobutanoate (2-oxoisovalerate) to form 3-carboxy-3-hydroxy-4-methylpentanoate (2-isopropylmalate). Involved in Leu biosynthesis, but does not participate in the chain elongation of glucosinolates. The sequence is that of 2-isopropylmalate synthase 2, chloroplastic from Arabidopsis thaliana (Mouse-ear cress).